The sequence spans 166 residues: Protein-export protein SecB (166 aa).

Belongs to the SecB family. Homotetramer, a dimer of dimers. One homotetramer interacts with 1 SecA dimer.

The protein localises to the cytoplasm. Its function is as follows. One of the proteins required for the normal export of preproteins out of the cell cytoplasm. It is a molecular chaperone that binds to a subset of precursor proteins, maintaining them in a translocation-competent state. It also specifically binds to its receptor SecA. In Roseobacter denitrificans (strain ATCC 33942 / OCh 114) (Erythrobacter sp. (strain OCh 114)), this protein is Protein-export protein SecB.